The sequence spans 120 residues: NADH-quinone oxidoreductase subunit A (120 aa).

3 helical membrane passes run 10 to 30 (ILVF…MGWF), 65 to 85 (VAIL…WAVV), and 89 to 109 (IGWF…VGFI).

This sequence belongs to the complex I subunit 3 family. As to quaternary structure, NDH-1 is composed of 14 different subunits. Subunits NuoA, H, J, K, L, M, N constitute the membrane sector of the complex.

Its subcellular location is the cell inner membrane. The enzyme catalyses a quinone + NADH + 5 H(+)(in) = a quinol + NAD(+) + 4 H(+)(out). In terms of biological role, NDH-1 shuttles electrons from NADH, via FMN and iron-sulfur (Fe-S) centers, to quinones in the respiratory chain. The immediate electron acceptor for the enzyme in this species is believed to be ubiquinone. Couples the redox reaction to proton translocation (for every two electrons transferred, four hydrogen ions are translocated across the cytoplasmic membrane), and thus conserves the redox energy in a proton gradient. This Coxiella burnetii (strain Dugway 5J108-111) protein is NADH-quinone oxidoreductase subunit A.